The following is a 540-amino-acid chain: MAAAKAEMQLMSPLQISDPFGSFPHSPTMDNYPKLEEMMLSNGAPQFLGAAGAPEGSSGSSSGSSGGGGGGGGGSSSSNSNSSSAFNPQGEASEQPYEHLTAESFPDISLNNEKVLVETSYPSQTTRLPPITYTGRFSLEPAPNSGNTLWPEPLFSLVSGLVSMTNPPATSSSASSPAASSSASQSPPLSCAVQSNDSSPIYSAAPTFPTPNTDIFPEPQGQAFPGSAGPALQYPPPAYPGAKGGFQVPMIPDYLFPQQQGDLGLGTPDQKPFQGLESRTQQPSLTPLSTIKAFATQSGSQDLKALNSTYQSQLIKPSRMRKYPNRPSKTPPHERPYACPVESCDRRFSRSDELTRHIRIHTGQKPQCRISMRNFSRSDHLTTHIRTHTGEKPFACDICGRKFARSDERKRHTKIHLRQKDKKADKSAASAATSSLPSYPSPVATSYPSPATTSYPSPATTSYPSPVPTSYSSPGSSTYPSPVHNGFPSPSVATTYSSVPPAFPTQVSSFPSSAVTNSFSASTGLSDMTTTFSPRTIEIC.

Disordered regions lie at residues 1–105 (MAAA…AESF) and 162–240 (VSMT…PAYP). Over residues 64–75 (SSGGGGGGGGGS) the composition is skewed to gly residues. A compositionally biased stretch (low complexity) spans 167–190 (PPATSSSASSPAASSSASQSPPLS). Over residues 192 to 201 (AVQSNDSSPI) the composition is skewed to polar residues. Residue Lys-304 forms a Glycyl lysine isopeptide (Lys-Gly) (interchain with G-Cter in SUMO2) linkage. Residues 317-337 (PSRMRKYPNRPSKTPPHERPY) are disordered. Residues 337–361 (YACPVESCDRRFSRSDELTRHIRIH) form a C2H2-type 1 zinc finger. The C2H2-type 2; degenerate zinc-finger motif lies at 366 to 388 (PQCRISMRNFSRSDHLTTHIRTH). The segment at 394-416 (FACDICGRKFARSDERKRHTKIH) adopts a C2H2-type 3 zinc-finger fold. Positions 407-482 (DERKRHTKIH…SPGSSTYPSP (76 aa)) are disordered. Residues 411–421 (RHTKIHLRQKD) show a composition bias toward basic residues. Low complexity predominate over residues 427–482 (SAASAATSSLPSYPSPVATSYPSPATTSYPSPATTSYPSPVPTSYSSPGSSTYPSP).

It belongs to the EGR C2H2-type zinc-finger protein family. Interacts with SNAI1 and SP1 upon 12-O-tetradecanoylphorbol-13-acetate (TPA) induction.

Its subcellular location is the nucleus. The protein localises to the cytoplasm. Transcriptional regulator. Recognizes and binds to the DNA sequence 5'-GCG(T/G)GGGCG-3'(EGR-site) in the promoter region of target genes. Binds double-stranded target DNA, irrespective of the cytosine methylation status. Regulates the transcription of numerous target genes, and thereby plays an important role in regulating the response to growth factors, DNA damage, and ischemia. Plays a role in the regulation of cell survival, proliferation and cell death. Activates expression of p53/TP53 and TGFB1, and thereby helps prevent tumor formation. Required for normal progress through mitosis and normal proliferation of hepatocytes after partial hepatectomy. Mediates responses to ischemia and hypoxia; regulates the expression of proteins such as IL1B and CXCL2 that are involved in inflammatory processes and development of tissue damage after ischemia. Regulates biosynthesis of luteinizing hormone (LHB) in the pituitary. Regulates the amplitude of the expression rhythms of clock genes: BMAL1, PER2 and NR1D1 in the liver via the activation of PER1 (clock repressor) transcription. Regulates the rhythmic expression of core-clock gene BMAL1 in the suprachiasmatic nucleus (SCN). The sequence is that of Early growth response protein 1 (EGR1) from Bos taurus (Bovine).